The primary structure comprises 341 residues: Sulfate/thiosulfate import ATP-binding protein CysA 2 (341 aa).

An ABC transporter domain is found at isoleucine 3 to leucine 235. Glycine 35–threonine 42 is an ATP binding site.

Belongs to the ABC transporter superfamily. Sulfate/tungstate importer (TC 3.A.1.6) family. The complex is composed of two ATP-binding proteins (CysA), two transmembrane proteins (CysT and CysW) and a solute-binding protein (CysP).

The protein resides in the cell inner membrane. It catalyses the reaction sulfate(out) + ATP + H2O = sulfate(in) + ADP + phosphate + H(+). The catalysed reaction is thiosulfate(out) + ATP + H2O = thiosulfate(in) + ADP + phosphate + H(+). In terms of biological role, part of the ABC transporter complex CysAWTP involved in sulfate/thiosulfate import. Responsible for energy coupling to the transport system. This is Sulfate/thiosulfate import ATP-binding protein CysA 2 from Agrobacterium fabrum (strain C58 / ATCC 33970) (Agrobacterium tumefaciens (strain C58)).